A 188-amino-acid chain; its full sequence is COMM domain-containing protein 1 (188 aa).

Residues 1 to 122 (MAAELEGSKC…CWDRGLRSLS (122 aa)) form a sufficient for interaction with SLC12A2 region. Cu cation is bound by residues H100, M109, and H133. Positions 117 to 185 (GLRSLSWRVD…EVEESISTLM (69 aa)) constitute a COMM domain. The required for binding to PtdIns(4,5)P2 stretch occupies residues 124–188 (RVDGKSQSRH…ESISTLMQPA (65 aa)).

The protein belongs to the COMM domain-containing protein 1 family. Component of the commander complex consisting of the CCC subcomplex and the retriever subcomplex. Component of the CCC (COMMD/CCDC22/CCDC93) subcomplex consisting of COMMD1, COMMD2, COMMD3, COMMD4, COMMD5, COMMD6, COMMD7, COMMD8, COMMD9, COMMD10, CCDC22 and CCDC93; within the complex forms a heterodimer with COMMD6. Interacts with VPS35L; the interaction associates the CCC complex with the retriever complex. Identified in a complex with an E3 ubiquitin ligase complex composed of TCEB1/elongin C, CUL2, SOCS1 and RBX1; in the complex interacts directly with SOCS1 and CUL2. Identified in a complex with NF-kappa-B. Interacts directly with SLC12A2. Interacts directly with ATP7B (via the N-terminal region). Interacts with ATP7A. Interacts with FAM107A; this interaction stabilizes COMMD1 in the nucleus. Interacts with CCS, CDKN2A, RELA, REL, RELB, NFKB1/p105, NFKB2/p100, NFKBIB, SCNN1D, SCNN1B, CFTR, CLU, SGK1, AKT1, CUL1, CUL2, CUL3, CUL4A, CUL4B, CUL5, CUL7, HIF1A. Post-translationally, ubiquitinated; undergoes both 'Lys-63'- and 'Lys-48'-linked polyubiquitination. Ubiquitinated by XIAP, leading to its proteasomal degradation.

It localises to the nucleus. The protein resides in the cytoplasm. Its subcellular location is the endosome membrane. The protein localises to the cytoplasmic vesicle. It is found in the early endosome. It localises to the recycling endosome. In terms of biological role, scaffold protein in the commander complex that is essential for endosomal recycling of transmembrane cargos; the commander complex is composed of the CCC subcomplex and the retriever subcomplex. Can modulate activity of cullin-RING E3 ubiquitin ligase (CRL) complexes by displacing CAND1; in vitro promotes CRL E3 activity and dissociates CAND1 from CUL1 and CUL2. Promotes ubiquitination of NF-kappa-B subunit RELA and its subsequent proteasomal degradation. Down-regulates NF-kappa-B activity. Involved in the regulation of membrane expression and ubiquitination of SLC12A2. Modulates Na(+) transport in epithelial cells by regulation of apical cell surface expression of amiloride-sensitive sodium channel (ENaC) subunits and by promoting their ubiquitination presumably involving NEDD4L. Promotes the localization of SCNN1D to recycling endosomes. Promotes CFTR cell surface expression through regulation of its ubiquitination. Down-regulates SOD1 activity by interfering with its homodimerization. Plays a role in copper ion homeostasis. Involved in copper-dependent ATP7A trafficking between the trans-Golgi network and vesicles in the cell periphery; the function is proposed to depend on its association within the CCC complex and cooperation with the WASH complex on early endosomes. Can bind one copper ion per monomer. May function to facilitate biliary copper excretion within hepatocytes. Binds to phosphatidylinositol 4,5-bisphosphate (PtdIns(4,5)P2). Involved in the regulation of HIF1A-mediated transcription; competes with ARNT/Hif-1-beta for binding to HIF1A resulting in decreased DNA binding and impaired transcriptional activation by HIF-1. Negatively regulates neuroblastoma G1/S phase cell cycle progression and cell proliferation by stimulating ubiquitination of NF-kappa-B subunit RELA and NF-kappa-B degradation in a FAM107A- and actin-dependent manner. In Bos taurus (Bovine), this protein is COMM domain-containing protein 1 (COMMD1).